Reading from the N-terminus, the 952-residue chain is Inter-alpha-trypsin inhibitor heavy chain H5 (952 aa).

A signal peptide spans 1-17 (MLLLLGLCLGLPLFSES). Positions 35–161 (VPRQLRLLQR…KAAFFLSYEE (127 aa)) constitute a VIT domain. 4 N-linked (GlcNAc...) asparagine glycosylation sites follow: Asn97, Asn127, Asn136, and Asn231. Positions 113-131 (QKDKKSSESVKDKRNRTSD) are enriched in basic and acidic residues. A disordered region spans residues 113 to 138 (QKDKKSSESVKDKRNRTSDDNEENGS). In terms of domain architecture, VWFA spans 295-478 (NVVFVLDISA…AQLIGFYDEI (184 aa)). N-linked (GlcNAc...) asparagine glycans are attached at residues Asn508, Asn776, Asn795, and Asn862. Residues 933–952 (ALGLSTPRKPETDRPHEESV) are disordered. A compositionally biased stretch (basic and acidic residues) spans 940–952 (RKPETDRPHEESV).

Belongs to the ITIH family.

The protein resides in the secreted. Its function is as follows. May act as a tumor suppressor. This is Inter-alpha-trypsin inhibitor heavy chain H5 (Itih5) from Mus musculus (Mouse).